A 239-amino-acid chain; its full sequence is Ribosomal RNA small subunit methyltransferase G (239 aa).

S-adenosyl-L-methionine contacts are provided by residues glycine 75, leucine 80, 126-127 (AE), and arginine 142.

The protein belongs to the methyltransferase superfamily. RNA methyltransferase RsmG family.

Its subcellular location is the cytoplasm. Its function is as follows. Specifically methylates the N7 position of guanine in position 518 of 16S rRNA. The chain is Ribosomal RNA small subunit methyltransferase G from Streptomyces coelicolor (strain ATCC BAA-471 / A3(2) / M145).